The sequence spans 441 residues: Zinc finger and BTB domain-containing protein 8A (441 aa).

The BTB domain maps to 24–92; it reads CDCSILVEGK…VYSGKLSLTG (69 aa). The disordered stretch occupies residues 135–248; sequence LSDKDTGSNG…HVSQSEEQVQ (114 aa). Phosphoserine occurs at positions 161 and 167. Glycyl lysine isopeptide (Lys-Gly) (interchain with G-Cter in SUMO2) cross-links involve residues lysine 178, lysine 182, and lysine 199. Basic and acidic residues-rich tracts occupy residues 198-208 and 227-242; these read AKHEQRKDPIK and GKGD…HVSQ. 2 C2H2-type zinc fingers span residues 282 to 304 and 310 to 333; these read FKCP…LRCH and YPCQ…RTIH. Lysine 437 is covalently cross-linked (Glycyl lysine isopeptide (Lys-Gly) (interchain with G-Cter in SUMO2)).

The protein resides in the nucleus. In terms of biological role, may be involved in transcriptional regulation. This chain is Zinc finger and BTB domain-containing protein 8A (Zbtb8a), found in Rattus norvegicus (Rat).